The following is an 834-amino-acid chain: Ras GTPase-activating protein 3 (834 aa).

C2 domains lie at 1–112 (MAVE…DTWF) and 123–263 (VQGK…EAWY). The residue at position 2 (Ala2) is an N-acetylalanine. Tyr66 carries the phosphotyrosine modification. At Ser77 the chain carries Phosphoserine. Position 110 is a phosphothreonine (Thr110). The 216-residue stretch at 346–561 (GRVVPFISAI…DAVKNFLDLI (216 aa)) folds into the Ras-GAP domain. The 102-residue stretch at 576–677 (ILLKEGFMIK…WIDILTKVSQ (102 aa)) folds into the PH domain. A Btk-type zinc finger spans residues 679-715 (NQKRLAVYHPSAYLNGHWLCCRASSDTAAGCSPCTGG). 4 residues coordinate Zn(2+): His687, Cys698, Cys699, and Cys709. The disordered stretch occupies residues 806-834 (KYGSQEHPIGDKSFQSYIRQQSETPAHSM). Ser809 and Ser833 each carry phosphoserine. Residues 818–834 (SFQSYIRQQSETPAHSM) show a composition bias toward polar residues.

Functionally, inhibitory regulator of the Ras-cyclic AMP pathway. May bind inositol tetrakisphosphate (IP4). The polypeptide is Ras GTPase-activating protein 3 (RASA3) (Bos taurus (Bovine)).